Reading from the N-terminus, the 225-residue chain is Orotidine 5'-phosphate decarboxylase (225 aa).

Substrate contacts are provided by residues D9, K31, 58–67 (DLKLHDIPNT), T115, R176, Q184, G204, and R205. K60 functions as the Proton donor in the catalytic mechanism.

The protein belongs to the OMP decarboxylase family. Type 1 subfamily. Homodimer.

The catalysed reaction is orotidine 5'-phosphate + H(+) = UMP + CO2. It functions in the pathway pyrimidine metabolism; UMP biosynthesis via de novo pathway; UMP from orotate: step 2/2. Its function is as follows. Catalyzes the decarboxylation of orotidine 5'-monophosphate (OMP) to uridine 5'-monophosphate (UMP). The sequence is that of Orotidine 5'-phosphate decarboxylase from Wolbachia sp. subsp. Brugia malayi (strain TRS).